We begin with the raw amino-acid sequence, 227 residues long: Cytochrome c oxidase subunit 2 (227 aa).

Over 1 to 14 the chain is Mitochondrial intermembrane; the sequence is MAHPVQLSLQDATS. Residues 15 to 45 traverse the membrane as a helical segment; sequence PIMEELITFHDHAFMAMSLISFLVLYALALT. Residues 46 to 59 are Mitochondrial matrix-facing; sequence LTTKLTNTNITDAQ. A helical transmembrane segment spans residues 60–87; that stretch reads EMETIWTILPAVILILIALPSLRVLYLT. Residues 88-227 lie on the Mitochondrial intermembrane side of the membrane; sequence DEVNDPSLTI…IFEMGPVFTL (140 aa). 6 residues coordinate Cu cation: H161, C196, E198, C200, H204, and M207. E198 lines the Mg(2+) pocket.

It belongs to the cytochrome c oxidase subunit 2 family. In terms of assembly, component of the cytochrome c oxidase (complex IV, CIV), a multisubunit enzyme composed of 14 subunits. The complex is composed of a catalytic core of 3 subunits MT-CO1, MT-CO2 and MT-CO3, encoded in the mitochondrial DNA, and 11 supernumerary subunits COX4I, COX5A, COX5B, COX6A, COX6B, COX6C, COX7A, COX7B, COX7C, COX8 and NDUFA4, which are encoded in the nuclear genome. The complex exists as a monomer or a dimer and forms supercomplexes (SCs) in the inner mitochondrial membrane with NADH-ubiquinone oxidoreductase (complex I, CI) and ubiquinol-cytochrome c oxidoreductase (cytochrome b-c1 complex, complex III, CIII), resulting in different assemblies (supercomplex SCI(1)III(2)IV(1) and megacomplex MCI(2)III(2)IV(2)). Found in a complex with TMEM177, COA6, COX18, COX20, SCO1 and SCO2. Interacts with TMEM177 in a COX20-dependent manner. Interacts with COX20. Interacts with COX16. Cu cation is required as a cofactor.

It is found in the mitochondrion inner membrane. The enzyme catalyses 4 Fe(II)-[cytochrome c] + O2 + 8 H(+)(in) = 4 Fe(III)-[cytochrome c] + 2 H2O + 4 H(+)(out). Functionally, component of the cytochrome c oxidase, the last enzyme in the mitochondrial electron transport chain which drives oxidative phosphorylation. The respiratory chain contains 3 multisubunit complexes succinate dehydrogenase (complex II, CII), ubiquinol-cytochrome c oxidoreductase (cytochrome b-c1 complex, complex III, CIII) and cytochrome c oxidase (complex IV, CIV), that cooperate to transfer electrons derived from NADH and succinate to molecular oxygen, creating an electrochemical gradient over the inner membrane that drives transmembrane transport and the ATP synthase. Cytochrome c oxidase is the component of the respiratory chain that catalyzes the reduction of oxygen to water. Electrons originating from reduced cytochrome c in the intermembrane space (IMS) are transferred via the dinuclear copper A center (CU(A)) of subunit 2 and heme A of subunit 1 to the active site in subunit 1, a binuclear center (BNC) formed by heme A3 and copper B (CU(B)). The BNC reduces molecular oxygen to 2 water molecules using 4 electrons from cytochrome c in the IMS and 4 protons from the mitochondrial matrix. The sequence is that of Cytochrome c oxidase subunit 2 (MT-CO2) from Macaca fascicularis (Crab-eating macaque).